We begin with the raw amino-acid sequence, 191 residues long: Ribosomal RNA small subunit methyltransferase G (191 aa).

S-adenosyl-L-methionine contacts are provided by residues glycine 62, phenylalanine 67, 111 to 112, and arginine 124; that span reads IE.

This sequence belongs to the methyltransferase superfamily. RNA methyltransferase RsmG family.

The protein localises to the cytoplasm. The catalysed reaction is guanosine(527) in 16S rRNA + S-adenosyl-L-methionine = N(7)-methylguanosine(527) in 16S rRNA + S-adenosyl-L-homocysteine. In terms of biological role, specifically methylates the N7 position of guanine in position 527 of 16S rRNA. The chain is Ribosomal RNA small subunit methyltransferase G from Rickettsia akari (strain Hartford).